A 247-amino-acid polypeptide reads, in one-letter code: Probable membrane transporter protein y4hK (247 aa).

6 consecutive transmembrane segments (helical) span residues 5 to 25, 31 to 51, 74 to 94, 121 to 141, 202 to 222, and 227 to 247; these read AIGLAIAFFVIALAYAAVGQA, IAAMALSGFSPLAIKPTALAL, VYPFAILGFPASALGGSVHLP, SALVITIPKTPPLHAALITGA, FLPWWLIAVAAGGSIGALIGS, and ASWLRVILSVLLMVSGLKLLW.

The protein belongs to the 4-toluene sulfonate uptake permease (TSUP) (TC 2.A.102) family.

The protein resides in the cell membrane. The chain is Probable membrane transporter protein y4hK from Sinorhizobium fredii (strain NBRC 101917 / NGR234).